The chain runs to 408 residues: Cytotoxic granule-associated RNA binding protein tiar-1 (408 aa).

RRM domains are found at residues 46–121 (RTLY…WAVE), 135–213 (FHVF…WATR), and 241–312 (TSVY…WGKT).

As to expression, expressed in the germline and also in somatic tissues. Expressed in Ggonads and oocytes. Expression is slightly reduced in the most proximal oocytes, especially the -1 oocyte. Aggregates mostly in the head neurons, muscles, intestine, vulval and hypodermal cells during heat shock. Expressed only in the intestine as a response to heat shock, starvation and dietary restriction.

The protein localises to the cytoplasm. It is found in the nucleus. Its subcellular location is the stress granule. Acts downstream of ced-9 in the induction of germline apoptosis under different stress conditions including starvation, osmotic, oxidative, heat shock and UV stress. Plays a role in the formation of stress granules in response to heat shock and oxidative stress but not in response to osmotic stress. Required for the formation of stress granules in the core gonad but may not play a critical role in this process in the oocytes. Plays an important role in the formation of stress granules in the embryo. Protects female germ cells and embryos from heat shock. The chain is Cytotoxic granule-associated RNA binding protein tiar-1 from Caenorhabditis elegans.